The following is a 536-amino-acid chain: Alpha-1,3-mannosyl-glycoprotein 4-beta-N-acetylglucosaminyltransferase A (536 aa).

At 1–6 (MRLRNG) the chain is on the cytoplasmic side. A helical; Signal-anchor for type II membrane protein membrane pass occupies residues 7–27 (TVATALVFITTFLSLSWYTAW). The stretch at 28 to 54 (QNGKEKLMAYQREFHALKERLRIAEHR) forms a coiled coil. At 28–536 (QNGKEKLMAY…EIHIKRNPAD (509 aa)) the chain is on the lumenal side. Residues asparagine 77 and asparagine 458 are each glycosylated (N-linked (GlcNAc...) asparagine).

The protein belongs to the glycosyltransferase 54 family. A divalent metal cation serves as cofactor. N-glycosylated.

It localises to the golgi apparatus membrane. Its subcellular location is the secreted. The enzyme catalyses N(4)-{beta-D-GlcNAc-(1-&gt;2)-alpha-D-Man-(1-&gt;3)-[beta-D-GlcNAc-(1-&gt;2)-alpha-D-Man-(1-&gt;6)]-beta-D-Man-(1-&gt;4)-beta-D-GlcNAc-(1-&gt;4)-beta-D-GlcNAc}-L-asparaginyl-[protein] + UDP-N-acetyl-alpha-D-glucosamine = N(4)-{beta-D-GlcNAc-(1-&gt;2)-[beta-D-GlcNAc-(1-&gt;4)]-alpha-D-Man-(1-&gt;3)-[beta-D-GlcNAc-(1-&gt;2)-alpha-D-Man-(1-&gt;6)]-beta-D-Man-(1-&gt;4)-beta-D-GlcNAc-(1-&gt;4)-beta-D-GlcNAc}-L-asparaginyl-[protein] + UDP + H(+). It catalyses the reaction an N(4)-{beta-D-GlcNAc-(1-&gt;2)-alpha-D-Man-(1-&gt;3)-[alpha-D-Man-(1-&gt;6)]-beta-D-Man-(1-&gt;4)-beta-D-GlcNAc-(1-&gt;4)-beta-D-GlcNAc}-L-asparaginyl-[protein] + UDP-N-acetyl-alpha-D-glucosamine = an N(4)-{beta-D-GlcNAc-(1-&gt;2)-[beta-D-GlcNAc-(1-&gt;4)]-alpha-D-Man-(1-&gt;3)-[alpha-D-Man-(1-&gt;6)]-beta-D-Man-(1-&gt;4)-beta-D-GlcNAc-(1-&gt;4)-beta-D-GlcNAc}-L-asparaginyl-[protein] + UDP + H(+). It carries out the reaction an N(4)-{beta-D-GlcNAc-(1-&gt;2)-alpha-D-Man-(1-&gt;3)-[beta-D-GlcNAc-(1-&gt;2)-[beta-D-GlcNAc-(1-&gt;6)]-alpha-D-Man-(1-&gt;6)]-beta-D-Man-(1-&gt;4)-beta-D-GlcNAc-(1-&gt;4)-beta-D-GlcNAc}-L-asparaginyl-[protein] + UDP-N-acetyl-alpha-D-glucosamine = an N(4)-{beta-D-GlcNAc-(1-&gt;2)-[beta-D-GlcNAc-(1-&gt;4)]-alpha-D-Man-(1-&gt;3)-[beta-D-GlcNAc-(1-&gt;2)-[beta-D-GlcNAc-(1-&gt;6)]-alpha-D-Man-(1-&gt;6)]-beta-D-Man-(1-&gt;4)-beta-D-GlcNAc-(1-&gt;4)-beta-D-GlcNAc}-L-asparaginyl-[protein] + UDP + H(+). The catalysed reaction is an N(4)-{beta-D-GlcNAc-(1-&gt;2)-alpha-D-Man-(1-&gt;3)-[beta-D-GlcNAc-(1-&gt;2)-alpha-D-Man-(1-&gt;6)]-beta-D-Man-(1-&gt;4)-beta-D-GlcNAc-(1-&gt;4)-[alpha-L-Fuc-(1-&gt;6)]-beta-D-GlcNAc}-L-asparaginyl-[protein] + UDP-N-acetyl-alpha-D-glucosamine = N(4)-{beta-D-GlcNAc-(1-&gt;2)-[beta-D-GlcNAc-(1-&gt;4)]-alpha-D-Man-(1-&gt;3)-[beta-D-GlcNAc-(1-&gt;2)-alpha-D-Man-(1-&gt;6)]-beta-D-Man-(1-&gt;4)-beta-D-GlcNAc-(1-&gt;4)-[alpha-L-Fuc-(1-&gt;6)]-beta-D-GlcNAc}-asparaginyl-[protein] + UDP + H(+). The enzyme catalyses an N(4)-{beta-D-GlcNAc-(1-&gt;2)-alpha-D-Man-(1-&gt;3)-[beta-D-Gal-(1-&gt;4)-beta-D-GlcNAc-(1-&gt;2)-alpha-D-Man-(1-&gt;6)]-beta-D-Man-(1-&gt;4)-beta-D-GlcNAc-(1-&gt;4)-beta-D-GlcNAc}-L-asparaginyl-[protein] + UDP-N-acetyl-alpha-D-glucosamine = an N(4)-{beta-D-GlcNAc-(1-&gt;2)-[beta-D-GlcNAc-(1-&gt;4)]-alpha-D-Man-(1-&gt;3)-[beta-D-Gal-(1-&gt;4)-beta-D-GlcNAc-(1-&gt;2)-alpha-D-Man-(1-&gt;6)]-beta-D-Man-(1-&gt;4)-beta-D-GlcNAc-(1-&gt;4)-beta-D-GlcNAc}-L-asparaginyl-[protein] + UDP + H(+). It catalyses the reaction N(4)-{beta-D-GlcNAc-(1-&gt;2)-alpha-D-Man-(1-&gt;3)-[alpha-D-Man-(1-&gt;3)-{alpha-D-Man-(1-&gt;6)}-alpha-D-Man-(1-&gt;6)]-beta-D-Man-(1-&gt;4)-beta-D-GlcNAc-(1-&gt;4)-beta-D-GlcNAc}-asparaginyl-[protein] + UDP-N-acetyl-alpha-D-glucosamine = N(4)-{beta-D-GlcNAc-(1-&gt;2)-[beta-D-GlcNAc-(1-&gt;4)]-alpha-D-Man-(1-&gt;3)-[alpha-D-Man-(1-&gt;3)-{alpha-D-Man-(1-&gt;6)}-alpha-D-Man-(1-&gt;6)]-beta-D-Man-(1-&gt;4)-beta-D-GlcNAc-(1-&gt;4)-beta-D-GlcNAc}-asparaginyl-[protein] + UDP + H(+). It carries out the reaction N(4)-{beta-D-GlcNAc-(1-&gt;2)-alpha-D-Man-(1-&gt;3)-beta-D-Man-(1-&gt;4)-beta-D-GlcNAc-(1-&gt;4)-beta-D-GlcNAc}-asparaginyl-[protein] + UDP-N-acetyl-alpha-D-glucosamine = N(4)-{beta-D-GlcNAc-(1-&gt;2)-[beta-D-GlcNAc-(1-&gt;4)]-alpha-D-Man-(1-&gt;3)-beta-D-Man-(1-&gt;4)-beta-D-GlcNAc-(1-&gt;4)-beta-D-GlcNAc}-asparaginyl-[protein] + UDP + H(+). The protein operates within protein modification; protein glycosylation. Its activity is regulated as follows. Inhibited by UDP. In terms of biological role, glycosyltransferase that catalyze the transfer of GlcNAc from UDP-GlcNAc to the GlcNAcbeta1-2Manalpha1-3 arm of the core structure of N-linked glycans through a beta1-4 linkage and participates in the production of tri- and tetra-antennary N-linked sugar chains. Involved in glucose transport by mediating SLC2A2/GLUT2 glycosylation, thereby controlling cell-surface expression of SLC2A2 in pancreatic beta cells. This Xenopus tropicalis (Western clawed frog) protein is Alpha-1,3-mannosyl-glycoprotein 4-beta-N-acetylglucosaminyltransferase A.